The sequence spans 42 residues: Photosystem I reaction center subunit IX (42 aa).

A helical membrane pass occupies residues 7–27 (YLSTAPVIATIWFGFLAGLLI).

It belongs to the PsaJ family.

The protein localises to the plastid. It localises to the chloroplast thylakoid membrane. In terms of biological role, may help in the organization of the PsaE and PsaF subunits. The protein is Photosystem I reaction center subunit IX of Chaetosphaeridium globosum (Charophycean green alga).